The chain runs to 311 residues: Olfactory receptor 6C3 (311 aa).

Residues 1 to 22 (MNHTMVTEFVLLGLSDDPDLQI) lie on the Extracellular side of the membrane. An N-linked (GlcNAc...) asparagine glycan is attached at Asn2. Residues 23–43 (VIFLFLFITYILSVTGNLTII) traverse the membrane as a helical segment. Residues 44–51 (TLTFVDSH) are Cytoplasmic-facing. The chain crosses the membrane as a helical span at residues 52–72 (LQTPMYFFLRNFSFLEISFTT). Residues 73–96 (VCIPRFLGAIITRNKTISYNNCAA) are Extracellular-facing. Cys94 and Cys186 form a disulfide bridge. The chain crosses the membrane as a helical span at residues 97–117 (QLFFFIFMGVTEFYILTAMSY). The Cytoplasmic portion of the chain corresponds to 118-136 (DRYVAICKPLHYTSIMNRK). A helical transmembrane segment spans residues 137-157 (LCTLLVLCAWLSGFLTIFPPL). Topologically, residues 158–194 (MLLLQLDYCASNVIDHFACDYFPLLQLSCSDTWLLEV) are extracellular. A helical membrane pass occupies residues 195–214 (IGFYFALVTLLFTLALVILS). The Cytoplasmic segment spans residues 215–234 (YMYIIRTILRIPSASQRKKA). The helical transmembrane segment at 235–255 (FSTCSSHMIVISISYGSCIFM) threads the bilayer. The Extracellular portion of the chain corresponds to 256-268 (YANPSAKEKASLT). A helical transmembrane segment spans residues 269–289 (KGIAILNTSVAPMLNPFIYTL). Residues 290–311 (RNQQVKQAFKNVVHKVVFYANQ) lie on the Cytoplasmic side of the membrane.

It belongs to the G-protein coupled receptor 1 family.

It is found in the cell membrane. Its function is as follows. Odorant receptor. The protein is Olfactory receptor 6C3 (OR6C3) of Homo sapiens (Human).